The following is a 96-amino-acid chain: MPNHASAKKMVRVIGKRTLSNRVRKSRVRNSVKAFVAALEANSPIEDAIAAFRKAESNIHKCVNKGVFHRNTAARKISALSGKLKAYDLARLQNEQ.

Belongs to the bacterial ribosomal protein bS20 family.

Its function is as follows. Binds directly to 16S ribosomal RNA. The polypeptide is Small ribosomal subunit protein bS20 (Anaplasma phagocytophilum (strain HZ)).